Consider the following 131-residue polypeptide: UPF0102 protein YraN (131 aa).

Over residues 1 to 19 (MATVPTRSGSPRQLTTKQT) the composition is skewed to polar residues. The tract at residues 1–20 (MATVPTRSGSPRQLTTKQTG) is disordered.

It belongs to the UPF0102 family.

This chain is UPF0102 protein YraN, found in Escherichia coli O17:K52:H18 (strain UMN026 / ExPEC).